The following is a 20-amino-acid chain: RGSXLTILPLRNKIDLFYVG.

It belongs to the peptidase A1 family. Post-translationally, N-glycosylated. As to expression, expressed in chorionic epithelium (trophectoderm).

It is found in the secreted. Its subcellular location is the extracellular space. The protein is Pregnancy-associated glycoprotein 73B of Bubalus bubalis (Domestic water buffalo).